We begin with the raw amino-acid sequence, 453 residues long: Bifunctional protein GlmU (453 aa).

The interval 1-226 (MLDILILAAG…IQEVEGINNR (226 aa)) is pyrophosphorylase. UDP-N-acetyl-alpha-D-glucosamine is bound by residues 7-10 (LAAG), Lys21, Gln72, 77-78 (GT), 99-101 (YGD), Gly136, Glu151, Asn166, and Asn224. Asp101 serves as a coordination point for Mg(2+). Asn224 provides a ligand contact to Mg(2+). Residues 227–247 (QQQATLERYYQQQQARALMDA) are linker. The interval 248–453 (GVTLLDPARF…QGWERPTRKS (206 aa)) is N-acetyltransferase. Residues Arg330 and Lys348 each contribute to the UDP-N-acetyl-alpha-D-glucosamine site. His360 (proton acceptor) is an active-site residue. Positions 363 and 374 each coordinate UDP-N-acetyl-alpha-D-glucosamine. Acetyl-CoA is bound by residues Ala377, 383–384 (NY), Ser402, Ala420, and Arg437.

In the N-terminal section; belongs to the N-acetylglucosamine-1-phosphate uridyltransferase family. It in the C-terminal section; belongs to the transferase hexapeptide repeat family. As to quaternary structure, homotrimer. The cofactor is Mg(2+).

Its subcellular location is the cytoplasm. It carries out the reaction alpha-D-glucosamine 1-phosphate + acetyl-CoA = N-acetyl-alpha-D-glucosamine 1-phosphate + CoA + H(+). The catalysed reaction is N-acetyl-alpha-D-glucosamine 1-phosphate + UTP + H(+) = UDP-N-acetyl-alpha-D-glucosamine + diphosphate. The protein operates within nucleotide-sugar biosynthesis; UDP-N-acetyl-alpha-D-glucosamine biosynthesis; N-acetyl-alpha-D-glucosamine 1-phosphate from alpha-D-glucosamine 6-phosphate (route II): step 2/2. It participates in nucleotide-sugar biosynthesis; UDP-N-acetyl-alpha-D-glucosamine biosynthesis; UDP-N-acetyl-alpha-D-glucosamine from N-acetyl-alpha-D-glucosamine 1-phosphate: step 1/1. Its pathway is bacterial outer membrane biogenesis; LPS lipid A biosynthesis. Functionally, catalyzes the last two sequential reactions in the de novo biosynthetic pathway for UDP-N-acetylglucosamine (UDP-GlcNAc). The C-terminal domain catalyzes the transfer of acetyl group from acetyl coenzyme A to glucosamine-1-phosphate (GlcN-1-P) to produce N-acetylglucosamine-1-phosphate (GlcNAc-1-P), which is converted into UDP-GlcNAc by the transfer of uridine 5-monophosphate (from uridine 5-triphosphate), a reaction catalyzed by the N-terminal domain. This chain is Bifunctional protein GlmU, found in Cellvibrio japonicus (strain Ueda107) (Pseudomonas fluorescens subsp. cellulosa).